A 702-amino-acid chain; its full sequence is Ribosomal RNA large subunit methyltransferase K/L (702 aa).

Residues 43 to 154 (LIYQSLMWSR…KETASIALDL (112 aa)) enclose the THUMP domain.

Belongs to the methyltransferase superfamily. RlmKL family.

It is found in the cytoplasm. The catalysed reaction is guanosine(2445) in 23S rRNA + S-adenosyl-L-methionine = N(2)-methylguanosine(2445) in 23S rRNA + S-adenosyl-L-homocysteine + H(+). The enzyme catalyses guanosine(2069) in 23S rRNA + S-adenosyl-L-methionine = N(2)-methylguanosine(2069) in 23S rRNA + S-adenosyl-L-homocysteine + H(+). Its function is as follows. Specifically methylates the guanine in position 2445 (m2G2445) and the guanine in position 2069 (m7G2069) of 23S rRNA. This chain is Ribosomal RNA large subunit methyltransferase K/L, found in Salmonella arizonae (strain ATCC BAA-731 / CDC346-86 / RSK2980).